We begin with the raw amino-acid sequence, 257 residues long: Pyridoxal phosphate homeostasis protein (257 aa).

An N6-(pyridoxal phosphate)lysine modification is found at lysine 47.

Belongs to the pyridoxal phosphate-binding protein YggS/PROSC family.

Functionally, pyridoxal 5'-phosphate (PLP)-binding protein, which is involved in PLP homeostasis. This chain is Pyridoxal phosphate homeostasis protein, found in Mycobacterium leprae (strain TN).